The primary structure comprises 159 residues: Dihydrofolate reductase (159 aa).

The DHFR domain occupies 2 to 157 (TLSILVAHDL…IPHTFLHLIR (156 aa)). 6 to 8 (LVA) contributes to the substrate binding site. Residues 7–8 (VA) and 15–20 (IGFENQ) each bind NADP(+). Asp28 provides a ligand contact to substrate. Residue 44-47 (GRKT) participates in NADP(+) binding. Arg58 is a binding site for substrate. Residues 63–66 (LTSD) and 93–98 (FGGQIL) each bind NADP(+). Thr112 lines the substrate pocket.

Belongs to the dihydrofolate reductase family.

It catalyses the reaction (6S)-5,6,7,8-tetrahydrofolate + NADP(+) = 7,8-dihydrofolate + NADPH + H(+). Its pathway is cofactor biosynthesis; tetrahydrofolate biosynthesis; 5,6,7,8-tetrahydrofolate from 7,8-dihydrofolate: step 1/1. Functionally, key enzyme in folate metabolism. Catalyzes an essential reaction for de novo glycine and purine synthesis, and for DNA precursor synthesis. This chain is Dihydrofolate reductase (folA), found in Staphylococcus aureus (strain MW2).